The sequence spans 726 residues: Methionine--tRNA ligase (726 aa).

Residues 12-22 carry the 'HIGH' region motif; it reads PYVNNIPHLGN. Zn(2+) contacts are provided by Cys-143, Cys-146, Cys-155, and Cys-158. The short motif at 330-334 is the 'KMSKS' region element; sequence KFSKS. Lys-333 provides a ligand contact to ATP. A tRNA-binding domain is found at 562-667; the sequence is FSEQICLKTV…DNPIPGERVI (106 aa).

Belongs to the class-I aminoacyl-tRNA synthetase family. MetG type 1 subfamily. As to quaternary structure, homodimer. The cofactor is Zn(2+).

It is found in the cytoplasm. It catalyses the reaction tRNA(Met) + L-methionine + ATP = L-methionyl-tRNA(Met) + AMP + diphosphate. Is required not only for elongation of protein synthesis but also for the initiation of all mRNA translation through initiator tRNA(fMet) aminoacylation. This chain is Methionine--tRNA ligase, found in Borrelia recurrentis (strain A1).